We begin with the raw amino-acid sequence, 338 residues long: Putative transport protein TM_1349 (338 aa).

Helical transmembrane passes span 20–40 (ILIS…IVLM), 68–88 (ALLL…PPVF), 147–167 (VSVT…VFYI), 203–223 (VIFI…EAFN), 239–259 (FIPI…SLTL), 263–283 (GVLL…VVFI), and 297–317 (IILS…FVGV).

Belongs to the autoinducer-2 exporter (AI-2E) (TC 2.A.86) family.

The protein resides in the cell membrane. This chain is Putative transport protein TM_1349, found in Thermotoga maritima (strain ATCC 43589 / DSM 3109 / JCM 10099 / NBRC 100826 / MSB8).